We begin with the raw amino-acid sequence, 303 residues long: Phosphate import ATP-binding protein PstB (303 aa).

Residues 56-298 enclose the ABC transporter domain; the sequence is LSTSDVHVYY…PDHQLTEAYI (243 aa). 88–95 is an ATP binding site; the sequence is GPSGCGKS.

The protein belongs to the ABC transporter superfamily. Phosphate importer (TC 3.A.1.7) family. The complex is composed of two ATP-binding proteins (PstB), two transmembrane proteins (PstC and PstA) and a solute-binding protein (PstS).

It localises to the cell inner membrane. It catalyses the reaction phosphate(out) + ATP + H2O = ADP + 2 phosphate(in) + H(+). Functionally, part of the ABC transporter complex PstSACB involved in phosphate import. Responsible for energy coupling to the transport system. The polypeptide is Phosphate import ATP-binding protein PstB (Acinetobacter baylyi (strain ATCC 33305 / BD413 / ADP1)).